The chain runs to 231 residues: NADH-ubiquinone oxidoreductase chain 4 (231 aa).

6 consecutive transmembrane segments (helical) span residues 1-21 (PIAGSMVLAAILLKLGGYGII), 34-54 (MFLPFIVLALWGAILANLTCL), 63-85 (IAYSSVSHMGLVVAAIIIQTPWG), 89-111 (AMALMIAHGFTSSALFCLANTTY), 128-148 (ILPMTTTWWLLANLMNIATPP), and 156-176 (LLIMSALFNWCPTTIIMLGLS).

The protein belongs to the complex I subunit 4 family.

Its subcellular location is the mitochondrion membrane. It catalyses the reaction a ubiquinone + NADH + 5 H(+)(in) = a ubiquinol + NAD(+) + 4 H(+)(out). Its function is as follows. Core subunit of the mitochondrial membrane respiratory chain NADH dehydrogenase (Complex I) that is believed to belong to the minimal assembly required for catalysis. Complex I functions in the transfer of electrons from NADH to the respiratory chain. The immediate electron acceptor for the enzyme is believed to be ubiquinone. This is NADH-ubiquinone oxidoreductase chain 4 (MT-ND4) from Trimeresurus stejnegeri (Chinese green tree viper).